Here is a 927-residue protein sequence, read N- to C-terminus: Isoleucine--tRNA ligase (927 aa).

The short motif at 57-67 (PYANGHIHIGH) is the 'HIGH' region element. Residue Glu-561 participates in L-isoleucyl-5'-AMP binding. A 'KMSKS' region motif is present at residues 602-606 (KMSKS). Residue Lys-605 participates in ATP binding. Zn(2+)-binding residues include Cys-897, Cys-900, Cys-917, and Cys-920.

This sequence belongs to the class-I aminoacyl-tRNA synthetase family. IleS type 1 subfamily. In terms of assembly, monomer. Zn(2+) is required as a cofactor.

It is found in the cytoplasm. It catalyses the reaction tRNA(Ile) + L-isoleucine + ATP = L-isoleucyl-tRNA(Ile) + AMP + diphosphate. Its function is as follows. Catalyzes the attachment of isoleucine to tRNA(Ile). As IleRS can inadvertently accommodate and process structurally similar amino acids such as valine, to avoid such errors it has two additional distinct tRNA(Ile)-dependent editing activities. One activity is designated as 'pretransfer' editing and involves the hydrolysis of activated Val-AMP. The other activity is designated 'posttransfer' editing and involves deacylation of mischarged Val-tRNA(Ile). The polypeptide is Isoleucine--tRNA ligase (Syntrophotalea carbinolica (strain DSM 2380 / NBRC 103641 / GraBd1) (Pelobacter carbinolicus)).